A 294-amino-acid polypeptide reads, in one-letter code: Eukaryotic translation initiation factor 3 subunit F (294 aa).

One can recognise an MPN domain in the interval valine 20–cysteine 163.

The protein belongs to the eIF-3 subunit F family. Component of the eukaryotic translation initiation factor 3 (eIF-3) complex.

The protein resides in the cytoplasm. In terms of biological role, component of the eukaryotic translation initiation factor 3 (eIF-3) complex, which is involved in protein synthesis of a specialized repertoire of mRNAs and, together with other initiation factors, stimulates binding of mRNA and methionyl-tRNAi to the 40S ribosome. The eIF-3 complex specifically targets and initiates translation of a subset of mRNAs involved in cell proliferation. The protein is Eukaryotic translation initiation factor 3 subunit F of Yarrowia lipolytica (strain CLIB 122 / E 150) (Yeast).